Here is a 644-residue protein sequence, read N- to C-terminus: Exoribonuclease 2 (644 aa).

One can recognise an RNB domain in the interval 189–516; it reads RRDLTALDFV…NHRLLKAIIK (328 aa). One can recognise an S1 motif domain in the interval 561 to 643; it reads DTRFAAEIID…ETRSIIARPA (83 aa).

The protein belongs to the RNR ribonuclease family. RNase II subfamily.

Its subcellular location is the cytoplasm. It carries out the reaction Exonucleolytic cleavage in the 3'- to 5'-direction to yield nucleoside 5'-phosphates.. Its function is as follows. Involved in mRNA degradation. Hydrolyzes single-stranded polyribonucleotides processively in the 3' to 5' direction. This chain is Exoribonuclease 2, found in Klebsiella pneumoniae subsp. pneumoniae (strain ATCC 700721 / MGH 78578).